A 427-amino-acid chain; its full sequence is Peptidase B (427 aa).

Lys-195 and Asp-200 together coordinate Mn(2+). The active site involves Lys-207. Residues Asp-218, Asp-277, and Glu-279 each coordinate Mn(2+). Arg-281 is an active-site residue.

This sequence belongs to the peptidase M17 family. Homohexamer. Requires Mn(2+) as cofactor.

Its subcellular location is the cytoplasm. It catalyses the reaction Release of an N-terminal amino acid, Xaa, from a peptide or arylamide. Xaa is preferably Glu or Asp but may be other amino acids, including Leu, Met, His, Cys and Gln.. Its function is as follows. Probably plays an important role in intracellular peptide degradation. The protein is Peptidase B of Shigella flexneri serotype 5b (strain 8401).